A 98-amino-acid polypeptide reads, in one-letter code: NADH-ubiquinone oxidoreductase chain 4L (98 aa).

The next 3 membrane-spanning stretches (helical) occupy residues 2-22 (TLTTMNILLAFFFSLLGTLIF), 29-49 (TLLCLEGMMLSLFIMTTITAL), and 61-81 (ITTLVFAACEAAVGLALLTMV).

This sequence belongs to the complex I subunit 4L family. Core subunit of respiratory chain NADH dehydrogenase (Complex I) which is composed of 45 different subunits.

The protein resides in the mitochondrion inner membrane. It carries out the reaction a ubiquinone + NADH + 5 H(+)(in) = a ubiquinol + NAD(+) + 4 H(+)(out). Its function is as follows. Core subunit of the mitochondrial membrane respiratory chain NADH dehydrogenase (Complex I) which catalyzes electron transfer from NADH through the respiratory chain, using ubiquinone as an electron acceptor. Part of the enzyme membrane arm which is embedded in the lipid bilayer and involved in proton translocation. This chain is NADH-ubiquinone oxidoreductase chain 4L (MT-ND4L), found in Oxymycterus rufus (Red hocicudo).